The following is a 366-amino-acid chain: 5-amino-6-(D-ribitylamino)uracil--L-tyrosine 4-hydroxyphenyl transferase (366 aa).

In terms of domain architecture, Radical SAM core spans 51–290 (RCGNAITWVK…MIAISRLFLD (240 aa)). 3 residues coordinate [4Fe-4S] cluster: Cys-70, Cys-74, and Cys-77.

It belongs to the radical SAM superfamily. CofH family. Consists of two subunits, CofG and CofH. [4Fe-4S] cluster is required as a cofactor.

It catalyses the reaction 5-amino-6-(D-ribitylamino)uracil + L-tyrosine + S-adenosyl-L-methionine = 5-amino-5-(4-hydroxybenzyl)-6-(D-ribitylimino)-5,6-dihydrouracil + 2-iminoacetate + 5'-deoxyadenosine + L-methionine + H(+). It functions in the pathway cofactor biosynthesis; coenzyme F0 biosynthesis. Its function is as follows. Catalyzes the radical-mediated synthesis of 5-amino-5-(4-hydroxybenzyl)-6-(D-ribitylimino)-5,6-dihydrouracil from 5-amino-6-(D-ribitylamino)uracil and L-tyrosine. The chain is 5-amino-6-(D-ribitylamino)uracil--L-tyrosine 4-hydroxyphenyl transferase from Methanospirillum hungatei JF-1 (strain ATCC 27890 / DSM 864 / NBRC 100397 / JF-1).